We begin with the raw amino-acid sequence, 336 residues long: MEEAAAASNGGLLYHEVQEGKLCAVHCVNTTLQGPFFSEFDLSALAVDLDQRERQVMSEGAAGAATTAAGDFLAEGEGSHNVSLGGDFSIQVLQKALEVWDLQVIPLDSPDVGSCLFDPELETAFICHLQDHWFCIRKVNGEWYNFNSLYPAPEHLSKFYLSAFIDTLKGSGWSIFAVRGNFPKECPMATEGSNGFGQWLTPDDARRITSSCNQVQTPTQQAGVSLVADQSEEMSEMDMIAAQQEEADLNAAIAASLMDTGGPFANYAAHEESRSQDAFAIESTSGEMSKDGNLEEQGANKSETSEPNSDNIESASGSNPKQNTTSLEGKESIKED.

Residues 10-193 (GGLLYHEVQE…KECPMATEGS (184 aa)) enclose the Josephin domain. C23 serves as the catalytic Nucleophile. Catalysis depends on H132, which acts as the Proton acceptor. The active site involves N147. The region spanning 244–263 (QEEADLNAAIAASLMDTGGP) is the UIM domain. A disordered region spans residues 281–336 (IESTSGEMSKDGNLEEQGANKSETSEPNSDNIESASGSNPKQNTTSLEGKESIKED). The segment covering 299–327 (ANKSETSEPNSDNIESASGSNPKQNTTSL) has biased composition (polar residues).

The protein resides in the nucleus. It catalyses the reaction Thiol-dependent hydrolysis of ester, thioester, amide, peptide and isopeptide bonds formed by the C-terminal Gly of ubiquitin (a 76-residue protein attached to proteins as an intracellular targeting signal).. Functionally, interacts with key regulators of transcription and represses transcription. Acts as a histone-binding protein that regulates transcription. Acts as a deubiquitinating enzyme. The chain is Putative ataxin-3 homolog from Oryza sativa subsp. japonica (Rice).